We begin with the raw amino-acid sequence, 172 residues long: Small ribosomal subunit protein uS5 (172 aa).

The region spanning 11 to 74 is the S5 DRBM domain; that stretch reads LSEVLVDVNR…QAAKKRMMKV (64 aa).

Belongs to the universal ribosomal protein uS5 family. As to quaternary structure, part of the 30S ribosomal subunit. Contacts proteins S4 and S8.

In terms of biological role, with S4 and S12 plays an important role in translational accuracy. Functionally, located at the back of the 30S subunit body where it stabilizes the conformation of the head with respect to the body. The polypeptide is Small ribosomal subunit protein uS5 (Rickettsia canadensis (strain McKiel)).